The sequence spans 306 residues: MNQYKNFIMQFEDIVGNNNVLIDEPMKKHTSFKVGGPADLLITPTTLEQVKDSIILCRNNSIPYYIIGNGSNLLVRDGGIRGVVIKFLKLGDIKVEVDRVIAQSGAPLTNICNEALKSNLGGLEFACGIPGSVGGAVTMNAGAYNGEISQVIESAKVIDKDGNVFLLNKEQLDLGYRMSAIQKYHYIVLEVTFKLHNSEYDTIKNRIMDLNRRRTEKQPLEYPSAGSTFKRPEGHFAAKLIEDTGLKGKSIGGAQVSEKHSGFIINKGGATAGDILNLIEFVQNKVKEKFQVDLHTEVRIIGEENN.

Positions 34-198 (VGGPADLLIT…LEVTFKLHNS (165 aa)) constitute an FAD-binding PCMH-type domain. Arginine 177 is an active-site residue. Serine 227 acts as the Proton donor in catalysis. Glutamate 297 is an active-site residue.

Belongs to the MurB family. FAD is required as a cofactor.

It localises to the cytoplasm. It catalyses the reaction UDP-N-acetyl-alpha-D-muramate + NADP(+) = UDP-N-acetyl-3-O-(1-carboxyvinyl)-alpha-D-glucosamine + NADPH + H(+). It functions in the pathway cell wall biogenesis; peptidoglycan biosynthesis. Functionally, cell wall formation. In Clostridium botulinum (strain 657 / Type Ba4), this protein is UDP-N-acetylenolpyruvoylglucosamine reductase.